The sequence spans 584 residues: Vesicular glutamate transporter 2.1 (584 aa).

The Cytoplasmic segment spans residues 1-70 (METPREPAGF…CTCFGLPRRY (70 aa)). The chain crosses the membrane as a helical span at residues 71–91 (IIAIMSGLGFCISFGIRCNLG). At 92–124 (VAIVSMVNNSTIHLNGKIIIKEKAKFNWDPETV) the chain is on the vesicular side. Asn-99 and Asn-100 each carry an N-linked (GlcNAc...) asparagine glycan. A helical membrane pass occupies residues 125 to 145 (GLIHGSFFWGYIVTQIPGGYI). Topologically, residues 146-148 (SSR) are cytoplasmic. Residues 149 to 169 (LAANRVFGAAILLTSTLNMFI) traverse the membrane as a helical segment. Over 170–177 (PSAARGHY) the chain is Vesicular. The helical transmembrane segment at 178–198 (GCVIFVRILQGLVEGVTYPAC) threads the bilayer. The Cytoplasmic segment spans residues 199-216 (HGIWSKWAPPLERSRLAT). Residues 217 to 237 (TSFCGSYAGAVIAMPLAGILV) form a helical membrane-spanning segment. Residues 238–244 (QYTGWSS) lie on the Vesicular side of the membrane. The helical transmembrane segment at 245–265 (VFYVYGCFGIFWYMFWILVSY) threads the bilayer. The Cytoplasmic segment spans residues 266 to 310 (ESPAEHPTITAEERCYIEESIGESAKLLGPADKFKTPWRKFFTSM). A helical transmembrane segment spans residues 311-331 (PVYAIIVANFCRSWTFYLLLI). At 332 to 349 (SQPAYFEEVFGFEISKVG) the chain is on the vesicular side. A helical membrane pass occupies residues 350–370 (MLSALPHLVMTIIVPIGGQLA). At 371–386 (DHLRSKNILSTTTVRK) the chain is on the cytoplasmic side. Residues 387–407 (IMNCGGFGMEATLLLIVGYSH) form a helical membrane-spanning segment. The Vesicular segment spans residues 408–409 (SK). The chain crosses the membrane as a helical span at residues 410 to 430 (GVAISFLVLAVGFSGFAISGF). Over 431–445 (NVNHLDIAPRYASIL) the chain is Cytoplasmic. A helical transmembrane segment spans residues 446-466 (MGISNGVGTLSGMVCPLIVGA). Topologically, residues 467-477 (MTKHKTREEWQ) are vesicular. Residues 478 to 498 (YVFLIASLVHYGGVIFYGIFA) traverse the membrane as a helical segment. The Cytoplasmic portion of the chain corresponds to 499-584 (SGEKQPWADP…YGYRQGGNYS (86 aa)).

The protein belongs to the major facilitator superfamily. Sodium/anion cotransporter family. VGLUT subfamily. Expressed in spinal cord and retinal ganglion cells.

The protein localises to the cytoplasmic vesicle. It localises to the secretory vesicle. The protein resides in the synaptic vesicle membrane. Its subcellular location is the membrane. It is found in the synapse. The protein localises to the synaptosome. It localises to the cell membrane. The catalysed reaction is L-glutamate(out) = L-glutamate(in). It carries out the reaction 3 Na(+)(out) + phosphate(out) = 3 Na(+)(in) + phosphate(in). It catalyses the reaction phosphate(in) = phosphate(out). The enzyme catalyses K(+)(in) + H(+)(out) = K(+)(out) + H(+)(in). The catalysed reaction is chloride(in) = chloride(out). Chloride channel activity is allosterically activated by lumenal H(+) and Cl(-) leading to synaptic vesicles acidification. The L-glutamate transport activity is allosterically activated by lumenal H(+) and Cl(-). The allosteric requirement for H(+) efficiently prevents non-vesicular efflux across the plasma membrane. The L-glutamate uniporter activity exhibits a biphasic dependence on chloride concentration. Multifunctional transporter that transports L-glutamate as well as multiple ions such as chloride, proton, potassium, sodium and phosphate. At the synaptic vesicle membrane, mainly functions as a uniporter which transports preferentially L-glutamate but also, phosphate from the cytoplasm into synaptic vesicles at presynaptic nerve terminals of excitatory neural cells. The L-glutamate or phosphate uniporter activity is electrogenic and is driven by the proton electrochemical gradient, mainly by the electrical gradient established by the vacuolar H(+)-ATPase across the synaptic vesicle membrane. In addition, functions as a chloride channel that allows a chloride permeation through the synaptic vesicle membrane therefore affects the proton electrochemical gradient and promotes synaptic vesicles acidification. Moreover, functions as a vesicular K(+)/H(+) antiport allowing to maintain the electrical gradient and to decrease chemical gradient and therefore sustain vesicular L-glutamate uptake. The vesicular H(+)/H(+) antiport activity is electroneutral. At the plasma membrane, following exocytosis, functions as a symporter of Na(+) and phosphate from the extracellular space to the cytoplasm allowing synaptic phosphate homeostasis regulation. The symporter activity is driven by an inside negative membrane potential and is electrogenic. Also involved in the regulation of retinal hyaloid vessel regression during postnatal development. May also play a role in the endocrine L-glutamatergic system of other tissues such as pineal gland and pancreas. Required for glutamate release by retinotectal synapses and visual acuity. This Danio rerio (Zebrafish) protein is Vesicular glutamate transporter 2.1 (slc17a6b).